The primary structure comprises 83 residues: UPF0457 protein YnzG (83 aa).

This sequence belongs to the UPF0457 family.

The polypeptide is UPF0457 protein YnzG (ynzG) (Bacillus subtilis (strain 168)).